The following is a 494-amino-acid chain: V-type proton ATPase subunit B (494 aa).

Arg384 contacts ATP.

Belongs to the ATPase alpha/beta chains family. V-ATPase is a heteromultimeric enzyme made up of two complexes: the ATP-hydrolytic V1 complex and the proton translocation V0 complex. The V1 complex consists of three catalytic AB heterodimers that form a heterohexamer, three peripheral stalks each consisting of EG heterodimers, one central rotor including subunits D and F, and the regulatory subunits C and H. The proton translocation complex V0 consists of the proton transport subunit a, a ring of proteolipid subunits c9c'', rotary subunit d, subunits e and f, and the accessory subunits VhaAC45 and ATP6AP2.

Non-catalytic subunit of the V1 complex of vacuolar(H+)-ATPase (V-ATPase), a multisubunit enzyme composed of a peripheral complex (V1) that hydrolyzes ATP and a membrane integral complex (V0) that translocates protons. V-ATPase is responsible for acidifying and maintaining the pH of intracellular compartments and in some cell types, is targeted to the plasma membrane, where it is responsible for acidifying the extracellular environment. Essential for the proper assembly and activity of V-ATPase. The chain is V-type proton ATPase subunit B (VHA55) from Heliothis virescens (Tobacco budworm moth).